The sequence spans 497 residues: Probable gamma-aminobutyrate transaminase 2, mitochondrial (497 aa).

The N-terminal 37 residues, 1-37 (MNLIKHAAFAASFQGETDCTSHASARKFSTSGSSPLL), are a transit peptide targeting the mitochondrion. 153–154 (GS) serves as a coordination point for pyridoxal 5'-phosphate. Residue Y186 coordinates substrate. D293 contacts pyridoxal 5'-phosphate. Substrate is bound at residue K322. At K322 the chain carries N6-(pyridoxal phosphate)lysine.

It belongs to the class-III pyridoxal-phosphate-dependent aminotransferase family.

The protein resides in the mitochondrion. The enzyme catalyses 4-aminobutanoate + pyruvate = succinate semialdehyde + L-alanine. The catalysed reaction is 4-aminobutanoate + glyoxylate = succinate semialdehyde + glycine. In terms of biological role, transaminase that degrades gamma-amino butyric acid (GABA). This is Probable gamma-aminobutyrate transaminase 2, mitochondrial from Oryza sativa subsp. indica (Rice).